Here is a 668-residue protein sequence, read N- to C-terminus: Fe(2+) transporter FeoB (668 aa).

A FeoB-type G domain is found at 3–165 (SYEIALIGNP…KKAISIAVKD (163 aa)). Residue 10–17 (GNPNVGKS) participates in GTP binding. Mg(2+)-binding residues include Asn21, Ala22, Thr24, and Gly25. GTP contacts are provided by residues 35 to 39 (GVTVE), 56 to 59 (DLPG), 116 to 119 (NKMD), and 145 to 147 (SAA). Helical transmembrane passes span 344-364 (VGAV…ISFL), 386-406 (LPGK…PAIM), 418-438 (ILTI…IYAL), 450-470 (VVIL…AFLF), 515-535 (IIVF…SGYL), 574-594 (ALVF…MLYG), 613-633 (AYAF…LAVI), and 643-663 (LFAV…ISVI).

Belongs to the TRAFAC class TrmE-Era-EngA-EngB-Septin-like GTPase superfamily. FeoB GTPase (TC 9.A.8) family. As to quaternary structure, the crystallized N-terminal domain is a homodimer.

It localises to the cell membrane. Functionally, probable transporter of a GTP-driven Fe(2+) uptake system, might be able to transport Fe(2+) into or out of the cell. This Methanocaldococcus jannaschii (strain ATCC 43067 / DSM 2661 / JAL-1 / JCM 10045 / NBRC 100440) (Methanococcus jannaschii) protein is Fe(2+) transporter FeoB.